We begin with the raw amino-acid sequence, 539 residues long: Alpha-aminoadipic semialdehyde dehydrogenase (539 aa).

The transit peptide at 1–26 (MLRLARPLCVQTVKASKLSRLWSRPA) directs the protein to the mitochondrion. Residues K86, K94, and K97 each carry the N6-acetyllysine; alternate modification. 3 positions are modified to N6-succinyllysine; alternate: K86, K94, and K97. Residues 192 to 194 (TAF), K218, 258 to 259 (GT), 274 to 275 (GS), 274 to 279 (GSTQVG), and 296 to 297 (EL) contribute to the NAD(+) site. Catalysis depends on E296, which acts as the Proton acceptor. The active-site Nucleophile is C330. T331 provides a ligand contact to (S)-2-amino-6-oxohexanoate. E427 contributes to the NAD(+) binding site. K462 carries the N6-acetyllysine modification. Residues G489 and A490 each coordinate (S)-2-amino-6-oxohexanoate. Residue K500 is modified to N6-acetyllysine. K537 is subject to N6-succinyllysine.

Belongs to the aldehyde dehydrogenase family. In terms of assembly, homotetramer. Abundant in kidney, liver, cochlea and outer hair cells but not inner hair cells or vestibular type I hair cells. Very low levels in lung, brain, intestine and pancreas.

It localises to the cytoplasm. The protein resides in the cytosol. The protein localises to the nucleus. Its subcellular location is the mitochondrion. It carries out the reaction nonanal + NAD(+) + H2O = nonanoate + NADH + 2 H(+). The enzyme catalyses (S)-2-amino-6-oxohexanoate + NAD(+) + H2O = L-2-aminoadipate + NADH + 2 H(+). It catalyses the reaction betaine aldehyde + NAD(+) + H2O = glycine betaine + NADH + 2 H(+). The catalysed reaction is an aldehyde + NAD(+) + H2O = a carboxylate + NADH + 2 H(+). It carries out the reaction hexanal + NAD(+) + H2O = hexanoate + NADH + 2 H(+). The enzyme catalyses octanal + NAD(+) + H2O = octanoate + NADH + 2 H(+). It catalyses the reaction (E)-non-2-enal + NAD(+) + H2O = (E)-non-2-enoate + NADH + 2 H(+). The catalysed reaction is (E)-4-hydroxynon-2-enal + NAD(+) + H2O = (E)-4-hydroxynon-2-enoate + NADH + 2 H(+). The protein operates within amine and polyamine biosynthesis; betaine biosynthesis via choline pathway; betaine from betaine aldehyde: step 1/1. In terms of biological role, multifunctional enzyme mediating important protective effects. Metabolizes betaine aldehyde to betaine, an important cellular osmolyte and methyl donor. Protects cells from oxidative stress by metabolizing a number of lipid peroxidation-derived aldehydes. Involved in lysine catabolism. This is Alpha-aminoadipic semialdehyde dehydrogenase from Rattus norvegicus (Rat).